The following is a 408-amino-acid chain: Multifunctional CCA protein (408 aa).

Glycine 8 and arginine 11 together coordinate ATP. The CTP site is built by glycine 8 and arginine 11. Residues aspartate 21 and aspartate 23 each coordinate Mg(2+). ATP is bound by residues arginine 91, arginine 137, and arginine 140. Arginine 91, arginine 137, and arginine 140 together coordinate CTP. The region spanning 228 to 329 (TGVHVLSVLE…LELLQSFDVY (102 aa)) is the HD domain.

Belongs to the tRNA nucleotidyltransferase/poly(A) polymerase family. Bacterial CCA-adding enzyme type 1 subfamily. Monomer. Can also form homodimers and oligomers. It depends on Mg(2+) as a cofactor. Ni(2+) is required as a cofactor.

It catalyses the reaction a tRNA precursor + 2 CTP + ATP = a tRNA with a 3' CCA end + 3 diphosphate. The enzyme catalyses a tRNA with a 3' CCA end + 2 CTP + ATP = a tRNA with a 3' CCACCA end + 3 diphosphate. Functionally, catalyzes the addition and repair of the essential 3'-terminal CCA sequence in tRNAs without using a nucleic acid template. Adds these three nucleotides in the order of C, C, and A to the tRNA nucleotide-73, using CTP and ATP as substrates and producing inorganic pyrophosphate. tRNA 3'-terminal CCA addition is required both for tRNA processing and repair. Also involved in tRNA surveillance by mediating tandem CCA addition to generate a CCACCA at the 3' terminus of unstable tRNAs. While stable tRNAs receive only 3'-terminal CCA, unstable tRNAs are marked with CCACCA and rapidly degraded. The protein is Multifunctional CCA protein of Pseudomonas syringae pv. syringae (strain B728a).